The following is a 506-amino-acid chain: MKQILFMDTTLRDGEQSPGVNLNEQEKLQIARQLERLGIHVMEAGFAAASEGDFQSVKRIANTIQNATVMSLARAKESDIRRAYEAVKGAVSPRLHVFLATSDIHMKYKLCMSKEDVLDSIYRSVTLGKSLFPTVQFSAEDATRTARDFLAEAVEVAIRAGANVINIPDTVGYTNPEEYYALFKYLQESVPSYEKAIFSCHCHDDLGMAVANSLAAVEGGALQVEGTINGIGERAGNAALEEVAVALHIRKDFYKAEPSMTLKEIKATSTLVSRLTGMVVPKNKAIVGANAFAHESGIHQDGVLKEVTTYEIIEPALVGESQNLFVLGKHSGRHAFTEKMKELGYEFTNDERDAVFEAFKKLADRKKEITEEDLRALMLGEAAFAAQQYNITQLQVHFVSNSTQCATVVLKDEEGNVFEDAATGSGSIEAIYNAIQRILGLECELADYRIQSITQGQDALAHVHVELKEGAHQVSGFGVAQDVLEASARAYVHAAGKLKSFIQLVK.

In terms of domain architecture, Pyruvate carboxyltransferase spans 4 to 266 (ILFMDTTLRD…EPSMTLKEIK (263 aa)). Mn(2+) contacts are provided by aspartate 13, histidine 201, histidine 203, and asparagine 237. The interval 390-506 (NITQLQVHFV…KLKSFIQLVK (117 aa)) is regulatory domain.

It belongs to the alpha-IPM synthase/homocitrate synthase family. LeuA type 1 subfamily. Homodimer. Requires Mn(2+) as cofactor.

It localises to the cytoplasm. The enzyme catalyses 3-methyl-2-oxobutanoate + acetyl-CoA + H2O = (2S)-2-isopropylmalate + CoA + H(+). It participates in amino-acid biosynthesis; L-leucine biosynthesis; L-leucine from 3-methyl-2-oxobutanoate: step 1/4. In terms of biological role, catalyzes the condensation of the acetyl group of acetyl-CoA with 3-methyl-2-oxobutanoate (2-ketoisovalerate) to form 3-carboxy-3-hydroxy-4-methylpentanoate (2-isopropylmalate). This Bacillus cereus (strain AH820) protein is 2-isopropylmalate synthase.